Consider the following 190-residue polypeptide: Hypoxanthine/guanine phosphoribosyltransferase (190 aa).

Belongs to the purine/pyrimidine phosphoribosyltransferase family. Archaeal HPRT subfamily. Homodimer.

The protein localises to the cytoplasm. It catalyses the reaction IMP + diphosphate = hypoxanthine + 5-phospho-alpha-D-ribose 1-diphosphate. The enzyme catalyses GMP + diphosphate = guanine + 5-phospho-alpha-D-ribose 1-diphosphate. It functions in the pathway purine metabolism; IMP biosynthesis via salvage pathway; IMP from hypoxanthine: step 1/1. Catalyzes a salvage reaction resulting in the formation of IMP that is energically less costly than de novo synthesis. The polypeptide is Hypoxanthine/guanine phosphoribosyltransferase (Methanohalobium evestigatum (strain ATCC BAA-1072 / DSM 3721 / NBRC 107634 / OCM 161 / Z-7303)).